Consider the following 219-residue polypeptide: Histone H1.4 (219 aa).

The span at Met-1 to Ala-15 shows a compositional bias: low complexity. Positions Met-1–Ser-41 are disordered. The residue at position 2 (Ser-2) is an N-acetylserine. At Ser-2 the chain carries Phosphoserine. Lys-17 is modified (N6-acetyllysine). Position 18 is a phosphothreonine (Thr-18). The segment covering Val-20–Ala-35 has biased composition (basic residues). Lys-26 is modified (N6-acetyllysine; alternate). An N6-methyllysine; alternate modification is found at Lys-26. Lys-34 carries the N6-(beta-hydroxybutyryl)lysine; alternate modification. Position 34 is an N6-succinyllysine; alternate (Lys-34). A Phosphoserine modification is found at Ser-36. Positions Ser-36–Lys-109 constitute an H15 domain. The residue at position 52 (Lys-52) is an N6-(beta-hydroxybutyryl)lysine. Arg-54 carries the post-translational modification Citrulline. 4 positions are modified to N6-(beta-hydroxybutyryl)lysine: Lys-64, Lys-85, Lys-90, and Lys-106. The segment at Thr-92–Lys-219 is disordered. Positions Lys-119 to Lys-140 are enriched in basic residues. Thr-146 carries the post-translational modification Phosphothreonine. Basic residues-rich tracts occupy residues Lys-149–Lys-160 and Lys-168–Pro-185. Ser-150 is subject to ADP-ribosylserine. Ser-187 carries the post-translational modification Phosphoserine. Residues Lys-192–Lys-219 are compositionally biased toward basic residues.

It belongs to the histone H1/H5 family. In terms of processing, H1 histones are progressively phosphorylated during the cell cycle, becoming maximally phosphorylated during late G2 phase and M phase, and being dephosphorylated sharply thereafter. Post-translationally, acetylated at Lys-26. Deacetylated at Lys-26 by SIRT1. Citrullination at Arg-54 (H1R54ci) by PADI4 takes place within the DNA-binding site of H1 and results in its displacement from chromatin and global chromatin decondensation, thereby promoting pluripotency and stem cell maintenance. In terms of processing, ADP-ribosylated on Ser-150 in response to DNA damage.

The protein resides in the nucleus. The protein localises to the chromosome. In terms of biological role, histone H1 protein binds to linker DNA between nucleosomes forming the macromolecular structure known as the chromatin fiber. Histones H1 are necessary for the condensation of nucleosome chains into higher-order structured fibers. Also acts as a regulator of individual gene transcription through chromatin remodeling, nucleosome spacing and DNA methylation. The protein is Histone H1.4 of Homo sapiens (Human).